The chain runs to 357 residues: Phenylalanine--tRNA ligase alpha subunit (357 aa).

Mg(2+) is bound at residue E257.

Belongs to the class-II aminoacyl-tRNA synthetase family. Phe-tRNA synthetase alpha subunit type 1 subfamily. Tetramer of two alpha and two beta subunits. Mg(2+) serves as cofactor.

The protein localises to the cytoplasm. The catalysed reaction is tRNA(Phe) + L-phenylalanine + ATP = L-phenylalanyl-tRNA(Phe) + AMP + diphosphate + H(+). The protein is Phenylalanine--tRNA ligase alpha subunit of Roseobacter denitrificans (strain ATCC 33942 / OCh 114) (Erythrobacter sp. (strain OCh 114)).